A 223-amino-acid chain; its full sequence is Chorismate dehydratase (223 aa).

Belongs to the MqnA/MqnD family. MqnA subfamily.

The catalysed reaction is chorismate = 3-[(1-carboxyvinyl)-oxy]benzoate + H2O. Its pathway is quinol/quinone metabolism; menaquinone biosynthesis. Functionally, catalyzes the dehydration of chorismate into 3-[(1-carboxyvinyl)oxy]benzoate, a step in the biosynthesis of menaquinone (MK, vitamin K2). This is Chorismate dehydratase from Campylobacter jejuni subsp. jejuni serotype O:23/36 (strain 81-176).